The chain runs to 156 residues: Small ribosomal subunit protein uS7 (156 aa).

This sequence belongs to the universal ribosomal protein uS7 family. In terms of assembly, part of the 30S ribosomal subunit. Contacts proteins S9 and S11.

Functionally, one of the primary rRNA binding proteins, it binds directly to 16S rRNA where it nucleates assembly of the head domain of the 30S subunit. Is located at the subunit interface close to the decoding center, probably blocks exit of the E-site tRNA. The protein is Small ribosomal subunit protein uS7 of Pelagibacter ubique (strain HTCC1062).